The primary structure comprises 598 residues: Eukaryotic translation initiation factor 3 subunit D (598 aa).

A disordered region spans residues 104-178 (VKTRGFGRGG…YDKPQRNRDS (75 aa)). Residues 109 to 132 (FGRGGGTIFRGRGQRGGAQRGRGG) show a composition bias toward gly residues. The segment covering 165–177 (GWKDYDKPQRNRD) has biased composition (basic and acidic residues). An RNA gate region spans residues 304–318 (SIDLVTVNENAADAP). The disordered stretch occupies residues 574-598 (NTFEEEDDTGAKAEKDEESEEKDEE). A compositionally biased stretch (acidic residues) spans 589-598 (DEESEEKDEE).

This sequence belongs to the eIF-3 subunit D family. Component of the eukaryotic translation initiation factor 3 (eIF-3) complex.

The protein resides in the cytoplasm. Functionally, mRNA cap-binding component of the eukaryotic translation initiation factor 3 (eIF-3) complex, which is involved in protein synthesis of a specialized repertoire of mRNAs and, together with other initiation factors, stimulates binding of mRNA and methionyl-tRNAi to the 40S ribosome. The eIF-3 complex specifically targets and initiates translation of a subset of mRNAs involved in cell proliferation. In the eIF-3 complex, eif3d specifically recognizes and binds the 7-methylguanosine cap of a subset of mRNAs. The chain is Eukaryotic translation initiation factor 3 subunit D from Coccidioides immitis (strain RS) (Valley fever fungus).